We begin with the raw amino-acid sequence, 353 residues long: tRNA U34 carboxymethyltransferase (353 aa).

Carboxy-S-adenosyl-L-methionine contacts are provided by residues Lys-101, Trp-119, Lys-124, Gly-144, 166–168 (DPS), 207–208 (LE), Met-227, Tyr-231, and Arg-346.

This sequence belongs to the class I-like SAM-binding methyltransferase superfamily. CmoB family. As to quaternary structure, homotetramer.

The enzyme catalyses carboxy-S-adenosyl-L-methionine + 5-hydroxyuridine(34) in tRNA = 5-carboxymethoxyuridine(34) in tRNA + S-adenosyl-L-homocysteine + H(+). Its function is as follows. Catalyzes carboxymethyl transfer from carboxy-S-adenosyl-L-methionine (Cx-SAM) to 5-hydroxyuridine (ho5U) to form 5-carboxymethoxyuridine (cmo5U) at position 34 in tRNAs. The protein is tRNA U34 carboxymethyltransferase of Psychrobacter sp. (strain PRwf-1).